Reading from the N-terminus, the 243-residue chain is Calcium-binding protein LPS1-beta (243 aa).

EF-hand domains follow at residues 15-49 (EVID…DCPE), 47-82 (CPEE…YTKE), 85-120 (YSSD…ISTK), 121-156 (LVEG…KLPL), 157-189 (CFKK…NLPG), 191-226 (YSEE…LSKD), and 227-243 (DIKN…NGKI). 30 residues coordinate Ca(2+): D29, N31, D33, T35, E40, D60, N62, D64, R66, E71, D98, D100, N102, R104, E109, D134, D136, D138, H140, E145, D167, N169, D171, S173, E178, D204, N206, D208, R210, and E215.

In terms of tissue distribution, aboral ectoderm, a squamous epithelium covering the surface of the late stage embryo and larva.

In terms of biological role, calcium-binding protein involved in larval development and metamorphosis. Likely to function as calcium buffers mediating the transport of calcium from the sea water to the blastocoel where calcium is required for skeleton formation. The polypeptide is Calcium-binding protein LPS1-beta (Lytechinus pictus (Painted sea urchin)).